A 922-amino-acid polypeptide reads, in one-letter code: Probable dipeptidyl-aminopeptidase B (922 aa).

Positions 1-16 (MATEKGHSRDDEERVP) are enriched in basic and acidic residues. Residues 1–21 (MATEKGHSRDDEERVPLTRGS) form a disordered region. Topologically, residues 1 to 99 (MATEKGHSRD…KPMHKSVKIA (99 aa)) are cytoplasmic. The helical; Signal-anchor for type II membrane protein transmembrane segment at 100 to 120 (LWSLLFLSLGGWSLAFVLFIF) threads the bilayer. At 121–922 (RSHDTYQTPI…AGLYKFKHLC (802 aa)) the chain is on the vacuolar side. Residues asparagine 135, asparagine 200, asparagine 351, and asparagine 574 are each glycosylated (N-linked (GlcNAc...) asparagine). Residue serine 756 is the Charge relay system of the active site. An N-linked (GlcNAc...) asparagine glycan is attached at asparagine 815. Catalysis depends on charge relay system residues aspartate 833 and histidine 866. Asparagine 902 carries an N-linked (GlcNAc...) asparagine glycan.

It belongs to the peptidase S9B family.

The protein resides in the vacuole membrane. The catalysed reaction is Release of an N-terminal dipeptide, Xaa-Yaa-|-Zaa-, from a polypeptide, preferentially when Yaa is Pro, provided Zaa is neither Pro nor hydroxyproline.. Functionally, type IV dipeptidyl-peptidase which removes N-terminal dipeptides sequentially from polypeptides having unsubstituted N-termini provided that the penultimate residue is proline. The polypeptide is Probable dipeptidyl-aminopeptidase B (DAPB) (Ajellomyces capsulatus (strain NAm1 / WU24) (Darling's disease fungus)).